Here is a 423-residue protein sequence, read N- to C-terminus: COP9 signalosome complex subunit 3 (423 aa).

One can recognise a PCI domain in the interval 197 to 365; the sequence is NFERALYFYE…GMVCFHDNPE (169 aa). The interval 402–423 is disordered; it reads QFVQKSMGSQEDDSGTKPSSYS.

Belongs to the CSN3 family. In terms of assembly, component of the CSN complex, probably composed of COPS1, COPS2, COPS3, COPS4, COPS5, COPS6, COPS7, COPS8 and COPS9.

The protein resides in the cytoplasm. The protein localises to the nucleus. In terms of biological role, component of the COP9 signalosome complex (CSN), a complex involved in various cellular and developmental processes. The CSN complex is an essential regulator of the ubiquitin (Ubl) conjugation pathway by mediating the deneddylation of the cullin subunits of E3 ligase complexes, leading to modify the Ubl ligase activity. The chain is COP9 signalosome complex subunit 3 (COPS3) from Gallus gallus (Chicken).